The following is a 306-amino-acid chain: Aspartate carbamoyltransferase catalytic subunit (306 aa).

Positions 53 and 54 each coordinate carbamoyl phosphate. Lysine 82 provides a ligand contact to L-aspartate. The carbamoyl phosphate site is built by arginine 103, histidine 131, and glutamine 134. Residues arginine 164 and arginine 226 each coordinate L-aspartate. Residues leucine 263 and proline 264 each contribute to the carbamoyl phosphate site.

This sequence belongs to the aspartate/ornithine carbamoyltransferase superfamily. ATCase family. Heterododecamer (2C3:3R2) of six catalytic PyrB chains organized as two trimers (C3), and six regulatory PyrI chains organized as three dimers (R2).

The enzyme catalyses carbamoyl phosphate + L-aspartate = N-carbamoyl-L-aspartate + phosphate + H(+). It functions in the pathway pyrimidine metabolism; UMP biosynthesis via de novo pathway; (S)-dihydroorotate from bicarbonate: step 2/3. Functionally, catalyzes the condensation of carbamoyl phosphate and aspartate to form carbamoyl aspartate and inorganic phosphate, the committed step in the de novo pyrimidine nucleotide biosynthesis pathway. The polypeptide is Aspartate carbamoyltransferase catalytic subunit (Methanocaldococcus jannaschii (strain ATCC 43067 / DSM 2661 / JAL-1 / JCM 10045 / NBRC 100440) (Methanococcus jannaschii)).